Consider the following 479-residue polypeptide: Ammonium transporter 3 member 2 (479 aa).

A run of 11 helical transmembrane segments spans residues 34-54 (VAAT…YGGV), 59-79 (WAVN…ICWV), 139-159 (VVYF…GSLL), 164-184 (FLAW…VGAF), 202-222 (GGYV…YWVG), 237-257 (ILFT…FNGG), 272-292 (NTNI…VIFF), 297-317 (VVGA…AAGV), 321-341 (WAAL…MMIL), 355-375 (LGVF…TGLF), and 407-427 (IAGG…ICLA).

This sequence belongs to the ammonia transporter channel (TC 1.A.11.2) family.

Its subcellular location is the membrane. Functionally, involved in ammonium transport. The chain is Ammonium transporter 3 member 2 (AMT3-2) from Oryza sativa subsp. japonica (Rice).